The sequence spans 365 residues: 1-aminocyclopropane-1-carboxylate oxidase homolog 1 (365 aa).

The Fe2OG dioxygenase domain maps to 212-313 (CTNSLLLLGH…RISVACFFSS (102 aa)). Positions 238, 240, and 294 each coordinate Fe cation.

This sequence belongs to the iron/ascorbate-dependent oxidoreductase family. Fe cation is required as a cofactor.

The polypeptide is 1-aminocyclopropane-1-carboxylate oxidase homolog 1 (Arabidopsis thaliana (Mouse-ear cress)).